The chain runs to 1235 residues: High-affinity potassium transport protein (1235 aa).

Ser15 is subject to Phosphoserine. 2 helical membrane passes run 49–70 (SFIAVHYFYTISLTLITSILLY) and 78–98 (IDTLFLAAGAVTQGGLNTVDI). N-linked (GlcNAc...) asparagine glycosylation occurs at Asn100. The helical transmembrane segment at 107 to 127 (IVLYIVCCISTPIAVHSCLAF) threads the bilayer. Disordered stretches follow at residues 161 to 310 (LTAR…SPAD), 323 to 344 (EATAEDEGPPLVIGSPADGTRY), 361 to 441 (KIKI…TKPP), and 488 to 565 (RLST…HQLQ). Positions 164–179 (RTMTKNRTGTQRTSYP) are enriched in polar residues. An N-linked (GlcNAc...) asparagine glycan is attached at Asn169. The span at 198–217 (VNRDEQDSVHSDQNSHDISR) shows a compositional bias: basic and acidic residues. Residues 219-232 (SSNNNTNHNGSSGS) are compositionally biased toward low complexity. Asn222 and Asn227 each carry an N-linked (GlcNAc...) asparagine glycan. Residues 237–247 (VKEDETDDNGE) are compositionally biased toward acidic residues. Polar residues predominate over residues 248-274 (YQENNSYSTVGSSSNTVADESLNQKPK). N-linked (GlcNAc...) asparagine glycosylation occurs at Asn251. 2 N-linked (GlcNAc...) asparagine glycosylation sites follow: Asn369 and Asn383. 2 stretches are compositionally biased toward polar residues: residues 370 to 415 (ESNT…SNSG) and 490 to 502 (STGSIEKNSSNNV). Ser414 bears the Phosphoserine mark. N-linked (GlcNAc...) asparagine glycans are attached at residues Asn497, Asn501, and Asn532. The span at 510 to 539 (DMDDDDDDDDNDGDNNEEYFADNESGDEDE) shows a compositional bias: acidic residues. Ser534 bears the Phosphoserine mark. A compositionally biased stretch (basic and acidic residues) spans 540-563 (RVQQSEPHSDSELKSHQQQQEKHQ). N-linked (GlcNAc...) asparagine glycosylation is found at Asn580 and Asn677. A disordered region spans residues 671-706 (HDGSHKNGSEEASSDSNENIYSTNGGSDHNGLNNYP). Residues 680–706 (EEASSDSNENIYSTNGGSDHNGLNNYP) show a composition bias toward polar residues. Helical transmembrane passes span 778 to 800 (ILVVYYVGWHIVAFVMLVPWIIL), 813 to 834 (VSPTWWGFWTAMSAFNDLGLTL), 838 to 858 (SMMSFNKAVYPLIVMIWFIII), 862 to 882 (GFPILLRCIIWIMFKISPDLS), and 898 to 918 (CFTLLFPKAATWWLLLTLAGL). Asn919 carries N-linked (GlcNAc...) asparagine glycosylation. The next 2 membrane-spanning stretches (helical) occupy residues 923–943 (WILFIILDFGSTVVKSLSKGY) and 971–991 (SIQVSYMLMMYVSVLPLAISI). Positions 1003 to 1063 (GLYGDMGGEP…KKKKKTENPN (61 aa)) are disordered. A compositionally biased stretch (acidic residues) spans 1010–1031 (GEPEDTDTEDDGNDEDDDEENE). N-linked (GlcNAc...) asparagine glycosylation is present at Asn1030. Residues 1036-1049 (QSSQRSSSNNNNNN) show a composition bias toward low complexity. 2 consecutive transmembrane segments (helical) span residues 1078–1098 (QLSFDLWFLFLGLFIICICEG) and 1111–1131 (IFAILFEIVSAYGTVGLSLGY). The N-linked (GlcNAc...) asparagine glycan is linked to Asn1135.

It belongs to the TrkH potassium transport family.

Its subcellular location is the membrane. Functionally, this protein is required for high-affinity potassium transport. The chain is High-affinity potassium transport protein (TRK1) from Saccharomyces cerevisiae (strain ATCC 204508 / S288c) (Baker's yeast).